The primary structure comprises 116 residues: Protein Rev (116 aa).

Residues serine 5 and serine 8 each carry the phosphoserine; by host CK2 modification. Positions 18 to 26 (LIKFLYQSN) are homomultimerization. The interval 23–48 (YQSNPPPSPEGTRQARRNRRRRWRAR) is disordered. The Nuclear localization signal and RNA-binding (RRE) motif lies at 34 to 50 (TRQARRNRRRRWRARQR). Residues 36 to 48 (QARRNRRRRWRAR) show a composition bias toward basic residues. The Nuclear export signal and binding to XPO1 signature appears at 73 to 84 (LQLPPLERLNLN). The tract at residues 90–116 (GTSGTQGVGSPQIPVEPPAVLESGTEE) is disordered. Phosphoserine; by host is present on residues serine 92 and serine 99.

The protein belongs to the HIV-1 REV protein family. In terms of assembly, homomultimer; when bound to the RRE. Multimeric assembly is essential for activity and may involve XPO1. Binds to human KPNB1, XPO1, TNPO1, RANBP5 and IPO7. Interacts with the viral Integrase. Interacts with human KHDRBS1. Interacts with human NAP1; this interaction decreases Rev multimerization and stimulates its activity. Interacts with human DEAD-box helicases DDX3 and DDX24; these interactions may serve for viral RNA export to the cytoplasm and packaging, respectively. Interacts with human PSIP1; this interaction may inhibit HIV-1 DNA integration by promoting dissociation of the Integrase-LEDGF/p75 complex. In terms of processing, asymmetrically arginine dimethylated at one site by host PRMT6. Methylation impairs the RNA-binding activity and export of viral RNA from the nucleus to the cytoplasm. Phosphorylated by protein kinase CK2. Presence of, and maybe binding to the N-terminus of the regulatory beta subunit of CK2 is necessary for CK2-mediated Rev's phosphorylation.

It localises to the host nucleus. Its subcellular location is the host nucleolus. The protein resides in the host cytoplasm. Its function is as follows. Escorts unspliced or incompletely spliced viral pre-mRNAs (late transcripts) out of the nucleus of infected cells. These pre-mRNAs carry a recognition sequence called Rev responsive element (RRE) located in the env gene, that is not present in fully spliced viral mRNAs (early transcripts). This function is essential since most viral proteins are translated from unspliced or partially spliced pre-mRNAs which cannot exit the nucleus by the pathway used by fully processed cellular mRNAs. Rev itself is translated from a fully spliced mRNA that readily exits the nucleus. Rev's nuclear localization signal (NLS) binds directly to KPNB1/Importin beta-1 without previous binding to KPNA1/Importin alpha-1. KPNB1 binds to the GDP bound form of RAN (Ran-GDP) and targets Rev to the nucleus. In the nucleus, the conversion from Ran-GDP to Ran-GTP dissociates Rev from KPNB1 and allows Rev's binding to the RRE in viral pre-mRNAs. Rev multimerization on the RRE via cooperative assembly exposes its nuclear export signal (NES) to the surface. Rev can then form a complex with XPO1/CRM1 and Ran-GTP, leading to nuclear export of the complex. Conversion from Ran-GTP to Ran-GDP mediates dissociation of the Rev/RRE/XPO1/RAN complex, so that Rev can return to the nucleus for a subsequent round of export. Beside KPNB1, also seems to interact with TNPO1/Transportin-1, RANBP5/IPO5 and IPO7/RANBP7 for nuclear import. The nucleoporin-like HRB/RIP is an essential cofactor that probably indirectly interacts with Rev to release HIV RNAs from the perinuclear region to the cytoplasm. The sequence is that of Protein Rev from Homo sapiens (Human).